A 170-amino-acid polypeptide reads, in one-letter code: Putative 3-methyladenine DNA glycosylase (170 aa).

Belongs to the DNA glycosylase MPG family.

This chain is Putative 3-methyladenine DNA glycosylase, found in Sodalis glossinidius.